The following is a 244-amino-acid chain: Phosphoadenosine 5'-phosphosulfate reductase (244 aa).

Cysteine 239 serves as the catalytic Nucleophile; cysteine thiosulfonate intermediate.

The protein belongs to the PAPS reductase family. CysH subfamily.

Its subcellular location is the cytoplasm. The enzyme catalyses [thioredoxin]-disulfide + sulfite + adenosine 3',5'-bisphosphate + 2 H(+) = [thioredoxin]-dithiol + 3'-phosphoadenylyl sulfate. Its pathway is sulfur metabolism; hydrogen sulfide biosynthesis; sulfite from sulfate: step 3/3. Functionally, catalyzes the formation of sulfite from phosphoadenosine 5'-phosphosulfate (PAPS) using thioredoxin as an electron donor. The sequence is that of Phosphoadenosine 5'-phosphosulfate reductase from Escherichia coli O157:H7.